A 461-amino-acid polypeptide reads, in one-letter code: Homogentisate 1,2-dioxygenase (461 aa).

Fe cation-binding residues include His341, Glu347, and His377.

This sequence belongs to the homogentisate dioxygenase family. It depends on Fe cation as a cofactor.

The catalysed reaction is homogentisate + O2 = 4-maleylacetoacetate + H(+). It functions in the pathway amino-acid degradation; L-phenylalanine degradation; acetoacetate and fumarate from L-phenylalanine: step 4/6. In Arabidopsis thaliana (Mouse-ear cress), this protein is Homogentisate 1,2-dioxygenase (HGO).